Here is a 235-residue protein sequence, read N- to C-terminus: Ubiquinone/menaquinone biosynthesis C-methyltransferase UbiE (235 aa).

The S-adenosyl-L-methionine site is built by threonine 60 and aspartate 81.

The protein belongs to the class I-like SAM-binding methyltransferase superfamily. MenG/UbiE family.

It carries out the reaction a 2-demethylmenaquinol + S-adenosyl-L-methionine = a menaquinol + S-adenosyl-L-homocysteine + H(+). The enzyme catalyses a 2-methoxy-6-(all-trans-polyprenyl)benzene-1,4-diol + S-adenosyl-L-methionine = a 5-methoxy-2-methyl-3-(all-trans-polyprenyl)benzene-1,4-diol + S-adenosyl-L-homocysteine + H(+). The protein operates within quinol/quinone metabolism; menaquinone biosynthesis; menaquinol from 1,4-dihydroxy-2-naphthoate: step 2/2. It participates in cofactor biosynthesis; ubiquinone biosynthesis. Its function is as follows. Methyltransferase required for the conversion of demethylmenaquinol (DMKH2) to menaquinol (MKH2) and the conversion of 2-polyprenyl-6-methoxy-1,4-benzoquinol (DDMQH2) to 2-polyprenyl-3-methyl-6-methoxy-1,4-benzoquinol (DMQH2). The polypeptide is Ubiquinone/menaquinone biosynthesis C-methyltransferase UbiE (Geotalea daltonii (strain DSM 22248 / JCM 15807 / FRC-32) (Geobacter daltonii)).